The primary structure comprises 332 residues: MTTRGLEDLDGGLGSCLPSDDLPFLEEPASGRRRESKARGTSRRADSSDWTHVLQDPVAAGAGDAGLKKMEKELAGKESTAGKAGTSPRIVPARRKPQAPPPLQPPPPPLQPPPRTPSDDLPWGDLTLNKCLVLASLVALLGSALQLCRDAVAGEVVAAPHPWVPPSSPPKKEASPAPKPPVLVSPSGSPQPKPGPPQARMQDEPELPGSPEATETRVERGGSISEASGEESVPLGDRGSQEKPRKEKPSKGEKLKKEKPRREKPRREDKSQVTGEPRQSLPRRWEAREGGRRPWGRDSRDLLEHGKLQAWAPRRRHDRDDRPRQKRGKGRD.

The segment at 1–80 (MTTRGLEDLD…EKELAGKEST (80 aa)) is mediates interaction with CACNA1S. 2 disordered regions span residues 1–125 (MTTR…PWGD) and 159–332 (APHP…KGRD). Residue Thr51 is modified to Phosphothreonine. Positions 66–76 (GLKKMEKELAG) are enriched in basic and acidic residues. Composition is skewed to pro residues over residues 98–116 (QAPP…PPRT) and 177–197 (APKP…PGPP). Over residues 221-232 (GGSISEASGEES) the composition is skewed to low complexity. Residues Ser223 and Ser228 each carry the phosphoserine modification. 2 stretches are compositionally biased toward basic and acidic residues: residues 239 to 256 (GSQE…EKLK) and 283 to 307 (RRWE…EHGK).

Interacts with CACNA1S, CACNB1 and calsequestrin. In terms of tissue distribution, specifically expressed in skeletal muscle. Detected in skeletal muscle and tongue (at protein level).

The protein localises to the sarcoplasmic reticulum membrane. It localises to the endoplasmic reticulum membrane. Involved in skeletal muscle excitation/contraction coupling (EC), probably acting as a regulator of the voltage-sensitive calcium channel CACNA1S. EC is a physiological process whereby an electrical signal (depolarization of the plasma membrane) is converted into a chemical signal, a calcium gradient, by the opening of ryanodine receptor calcium release channels. May regulate CACNA1S membrane targeting and activity. This Mus musculus (Mouse) protein is Junctional sarcoplasmic reticulum protein 1 (Jsrp1).